Reading from the N-terminus, the 205-residue chain is Golgi apparatus membrane protein TVP23 homolog B (205 aa).

Met-1 carries the post-translational modification N-acetylmethionine. The segment covering 1-21 (MLSQDSNDDTEDVSLFDAEEE) has biased composition (acidic residues). Residues 1–27 (MLSQDSNDDTEDVSLFDAEEETTNRPR) are disordered. A run of 4 helical transmembrane segments spans residues 34-53 (PVASFFHLFFRVSAVVVYLL), 54-72 (CELLSSSFIACMVTIILLL), 126-146 (IFWLGLIACPVLWVIFAFSAL), and 152-172 (KWLAVVIMGVVLQGANLYGYI).

This sequence belongs to the TVP23 family.

It is found in the membrane. The chain is Golgi apparatus membrane protein TVP23 homolog B (Tvp23b) from Mus musculus (Mouse).